The chain runs to 160 residues: Glyoxalase domain-containing protein 5 (160 aa).

The VOC domain occupies R33 to Y153.

It belongs to the glyoxalase I family.

The chain is Glyoxalase domain-containing protein 5 (glod5) from Xenopus tropicalis (Western clawed frog).